Here is an 886-residue protein sequence, read N- to C-terminus: MTLRRSILAFTGGMILVLALICSTFMCHMMMGTLSDLEEAYVHQKVDGTLFYLQEDLSSLKRAAEDWGHWNDTRDFVIGENDQYIQDNLNSWTLSGLDVDFMIYYDRSGNLFYSRAFNHATGEEVPAPGRLLSLAKDDPLIAHSSPEDGLTGIVSDPEGLLLVSSTTILDSHWKGPISGTFIVGRRLDGARAEGLARLSGIDLRMAATAPVGESEGTNSKTSLLIVKEDSDTLIATKTIDDVYGNPTVLLEAQVPREIRSRGLETIRRQVVGIFLASLLFGGLILLFLELSILMPLATITSSVEAIREQEKGQGSRIPTVGPAELATLAESINEMLDHLESYNQKLAMSEKRFRTIVDTAHDCIFIKDPKSRYVLVNPVMERIFQLPASKMLGERDEVFFSAETAARIREKDAGVLSGEPFVGEVSAHTRAGSSMTFHAVKVPLRDDRGQVTGICGIARDITDIKEAGVELLKRDRLLSASAAASYSLLVNYDIDQIIIDVLQLLGEAVEADRAYIFENQTVDGEVLMSQRYEWTKGEVEPQINNPVLQSLPYHPDSSTFYEIISRGRPYVGLVKDLPESERAYLAPQGIVSILIVPIFVEDRLWGFIGFDDCHRERFWSNGEISVLQVAAGSIGGAFIRSRTRADLVRAKGELQERIGEVEAKNAEMERFVYTVSHDLRSPLVTIQGFVGFLREDLSALDGDKIKIDLAMIEEAVLKMDHLLKDTLSLSRVGRVVNPPEEGSFGEIVHEALSQASGELRSRGIKVSLAEGWPRVRVDRLRVQEALTNLLDNSIKYMGDRPHPEIEVGWRPEGEETVFFVRDNGIGMDPDQWEKVFGLFYKIDPDSEGSGVGLAIVRRIIEVHGGRIWIESEEGRGTCVLFTLPTP.

Helical transmembrane passes span 7 to 27 (ILAF…TFMC) and 270 to 290 (VVGI…FLEL). The HAMP domain maps to 290 to 344 (LSILMPLATITSSVEAIREQEKGQGSRIPTVGPAELATLAESINEMLDHLESYNQ). The PAS domain occupies 349–419 (SEKRFRTIVD…EKDAGVLSGE (71 aa)). The 53-residue stretch at 421-473 (FVGEVSAHTRAGSSMTFHAVKVPLRDDRGQVTGICGIARDITDIKEAGVELLK) folds into the PAC domain. The 213-residue stretch at 674–886 (TVSHDLRSPL…TCVLFTLPTP (213 aa)) folds into the Histidine kinase domain. A Phosphohistidine; by autocatalysis modification is found at His-677.

Post-translationally, autophosphorylated.

Its subcellular location is the cell membrane. It catalyses the reaction ATP + protein L-histidine = ADP + protein N-phospho-L-histidine.. Member of the two-component regulatory system FilI/FilRs, which is involved in the regulation of methanogenesis. Autophosphorylates and specifically transfers the phosphoryl group to both FilR1 and FilR2. Functionally, could also catalyze the synthesis of the quorum sensing (QS) signal molecules carboxyl-acyl homoserine lactones (AHLs), which regulate the transition of the cellular morphology from short cells to filaments and of the carbon metabolic flux from biomass formation to methane production. This chain is Methanogenesis regulatory histidine kinase FilI, found in Methanothrix harundinacea (strain 6Ac) (Methanosaeta harundinacea).